Consider the following 148-residue polypeptide: Basic leucine zipper 4 (148 aa).

The bZIP domain occupies 48–97; sequence DDKKRRRTISNRESAKRSRMKKKKRFEELTEEVNRLNIRNQELKNRLANV. The tract at residues 50 to 70 is disordered; sequence KKRRRTISNRESAKRSRMKKK. The segment at 50–72 is basic motif; it reads KKRRRTISNRESAKRSRMKKKKR. The leucine-zipper stretch occupies residues 76–90; sequence LTEEVNRLNIRNQEL.

Its subcellular location is the nucleus. In terms of biological role, probable transcription factor involved in somatic embryogenesis. Acts as a positive regulator of BHLH109. This chain is Basic leucine zipper 4, found in Arabidopsis thaliana (Mouse-ear cress).